The primary structure comprises 134 residues: Large ribosomal subunit protein bL17 (134 aa).

The protein belongs to the bacterial ribosomal protein bL17 family. As to quaternary structure, part of the 50S ribosomal subunit. Contacts protein L32.

This is Large ribosomal subunit protein bL17 from Colwellia psychrerythraea (strain 34H / ATCC BAA-681) (Vibrio psychroerythus).